Consider the following 548-residue polypeptide: Chaperonin GroEL (548 aa).

ATP-binding positions include 30-33 (TLGP), Lys-51, 87-91 (DGTTT), Gly-415, 479-481 (NAA), and Asp-495.

The protein belongs to the chaperonin (HSP60) family. Forms a cylinder of 14 subunits composed of two heptameric rings stacked back-to-back. Interacts with the co-chaperonin GroES.

The protein resides in the cytoplasm. It carries out the reaction ATP + H2O + a folded polypeptide = ADP + phosphate + an unfolded polypeptide.. Together with its co-chaperonin GroES, plays an essential role in assisting protein folding. The GroEL-GroES system forms a nano-cage that allows encapsulation of the non-native substrate proteins and provides a physical environment optimized to promote and accelerate protein folding. In Lawsonia intracellularis (strain PHE/MN1-00), this protein is Chaperonin GroEL.